The sequence spans 107 residues: EPIDERMAL PATTERNING FACTOR-like protein 5 (107 aa).

A signal peptide spans 1–22 (MGVVLPTLIVYAFLLFFSSSSA). Disulfide bonds link Cys64/Cys98, Cys68/Cys74, and Cys71/Cys100.

This sequence belongs to the plant cysteine rich small secretory peptide family. Epidermal patterning factor subfamily. Interacts with ERECTA. Expressed asymetically in the hypocotyl, on the side proximal to the folded cotyledons at germination. Detected in developing flowers, the chalazal region of ovules and near the root apex, but not in inflorescence stems. Expressed in cotyledons, flowers, adult leaves and fruits.

The protein localises to the secreted. Functionally, controls stomatal patterning. Mediates differentiation of stomatal lineage cells to pavement cells and stomatal development inhibition. TMM (AC Q9SSD1) functions to dampen or block CLL1 signaling. Acts as a growth-regulatory ligand for ERECTA family receptors. Promotes fruit growth and fertility. The polypeptide is EPIDERMAL PATTERNING FACTOR-like protein 5 (Arabidopsis thaliana (Mouse-ear cress)).